The following is a 239-amino-acid chain: Derlin-2 (239 aa).

The Cytoplasmic segment spans residues 1–57 (MAYQSLRLEYLQIPPVSRAYTTACVLTTAAVQLELITPFQLYFNPELIFKHFQIWRL). The chain crosses the membrane as a helical span at residues 58–78 (ITNFLFFGPVGFNFLFNMIFL). Topologically, residues 79–96 (YRYCRMLEEGSFRGRTAD) are lumenal. The chain crosses the membrane as a helical span at residues 97 to 117 (FVFMFLFGGFLMTLFGLFVSL). Residues 118-150 (VFLGQAFTIMLVYVWSRRNPYVRMNFFGLLNFQ) lie on the Cytoplasmic side of the membrane. Residues 151 to 171 (APFLPWVLMGFSLLLGNSIIV) traverse the membrane as a helical segment. Residue aspartate 172 is a topological domain, lumenal. The helical transmembrane segment at 173 to 193 (LLGIAVGHIYFFLEDIFPNQP) threads the bilayer. At 194–239 (GGIRILKTPSILRTIFDTPDEDPNYNPLPEERPGGFAWGEGQRLGG) the chain is on the cytoplasmic side. Residues 214 to 239 (EDPNYNPLPEERPGGFAWGEGQRLGG) are disordered. Residues 229 to 239 (FAWGEGQRLGG) show a composition bias toward gly residues.

Belongs to the derlin family. As to quaternary structure, forms homo- and heterooligomers with DERL3 and, to a lesser extent, with DERL1. Interacts with the SEL1L/SYVN1 and VCP/SELENOS protein complexes. Mediates association between VCP and EDEM1, as well as that between VCP and the misfolded glycoproteins. Interacts with OS9. Interacts with SELENOK and SELENOS. Interacts with the signal recognition particle/SRP and the SRP receptor; in the process of endoplasmic reticulum stress-induced pre-emptive quality control. Interacts with CCDC47. Widely expressed, with lowest levels in brain and heart.

The protein localises to the endoplasmic reticulum membrane. Functionally, functional component of endoplasmic reticulum-associated degradation (ERAD) for misfolded lumenal glycoproteins, but not that of misfolded nonglycoproteins. May act by forming a channel that allows the retrotranslocation of misfolded glycoproteins into the cytosol where they are ubiquitinated and degraded by the proteasome. May mediate the interaction between VCP and misfolded glycoproteins. May also be involved in endoplasmic reticulum stress-induced pre-emptive quality control, a mechanism that selectively attenuates the translocation of newly synthesized proteins into the endoplasmic reticulum and reroutes them to the cytosol for proteasomal degradation. The protein is Derlin-2 of Mus musculus (Mouse).